Here is a 190-residue protein sequence, read N- to C-terminus: NADH-quinone oxidoreductase subunit C (190 aa).

Belongs to the complex I 30 kDa subunit family. NDH-1 is composed of 14 different subunits. Subunits NuoB, C, D, E, F, and G constitute the peripheral sector of the complex.

The protein resides in the cell membrane. The enzyme catalyses a quinone + NADH + 5 H(+)(in) = a quinol + NAD(+) + 4 H(+)(out). In terms of biological role, NDH-1 shuttles electrons from NADH, via FMN and iron-sulfur (Fe-S) centers, to quinones in the respiratory chain. The immediate electron acceptor for the enzyme in this species is believed to be ubiquinone. Couples the redox reaction to proton translocation (for every two electrons transferred, four hydrogen ions are translocated across the cytoplasmic membrane), and thus conserves the redox energy in a proton gradient. This is NADH-quinone oxidoreductase subunit C from Wolbachia sp. subsp. Brugia malayi (strain TRS).